Here is a 387-residue protein sequence, read N- to C-terminus: 3-ketoacyl-CoA thiolase (387 aa).

C91 serves as the catalytic Acyl-thioester intermediate. Catalysis depends on proton acceptor residues H343 and C373.

This sequence belongs to the thiolase-like superfamily. Thiolase family. In terms of assembly, heterotetramer of two alpha chains (FadB) and two beta chains (FadA).

Its subcellular location is the cytoplasm. It catalyses the reaction an acyl-CoA + acetyl-CoA = a 3-oxoacyl-CoA + CoA. Its pathway is lipid metabolism; fatty acid beta-oxidation. In terms of biological role, catalyzes the final step of fatty acid oxidation in which acetyl-CoA is released and the CoA ester of a fatty acid two carbons shorter is formed. The polypeptide is 3-ketoacyl-CoA thiolase (Erwinia tasmaniensis (strain DSM 17950 / CFBP 7177 / CIP 109463 / NCPPB 4357 / Et1/99)).